A 380-amino-acid polypeptide reads, in one-letter code: E3 ubiquitin-protein ligase RNF13 (380 aa).

An N-terminal signal peptide occupies residues 1-34 (MLLSIGMLMLSATQVYTILTVQLFAFLNLLPVEA). The Lumenal segment spans residues 35–182 (DILAYNFENA…VPELSLPLEY (148 aa)). The PA domain maps to 64–160 (LKGFLINSKP…GESSANSLKD (97 aa)). N-linked (GlcNAc...) asparagine glycosylation is present at Asn-88. A helical membrane pass occupies residues 183 to 203 (YLIPFLIIVGICLILIVIFMI). Residues 204 to 380 (TKFVQDRHRN…EPDYNIANTV (177 aa)) are Cytoplasmic-facing. Residues 240 to 282 (CAICLEEYEDGDKLRILPCSHAYHCKCVDPWLTKTKKTCPVCK) form an RING-type; atypical zinc finger. The segment at 285 to 380 (VVPSQGDSDS…EPDYNIANTV (96 aa)) is disordered. Residues 338–356 (SDYEDDDNEETDSSDADNE) are compositionally biased toward acidic residues.

In terms of assembly, interacts with ERN1. Autoubiquitinated.

It localises to the endoplasmic reticulum membrane. The protein resides in the late endosome membrane. Its subcellular location is the lysosome membrane. It is found in the nucleus inner membrane. The enzyme catalyses S-ubiquitinyl-[E2 ubiquitin-conjugating enzyme]-L-cysteine + [acceptor protein]-L-lysine = [E2 ubiquitin-conjugating enzyme]-L-cysteine + N(6)-ubiquitinyl-[acceptor protein]-L-lysine.. Its pathway is protein modification; protein ubiquitination. Its function is as follows. E3 ubiquitin-protein ligase that regulates cell proliferation. Involved in apoptosis regulation. Mediates ER stress-induced activation of JNK signaling pathway and apoptosis by promoting ERN1 activation and splicing of XBP1 mRNA. Also involved in protein trafficking and localization. This Rattus norvegicus (Rat) protein is E3 ubiquitin-protein ligase RNF13 (Rnf13).